The chain runs to 355 residues: 1D-myo-inositol 2-acetamido-2-deoxy-alpha-D-glucopyranoside deacetylase 3 (355 aa).

Residues histidine 31, aspartate 34, and histidine 169 each coordinate Zn(2+).

This sequence belongs to the MshB deacetylase family. Zn(2+) is required as a cofactor.

The enzyme catalyses 1D-myo-inositol 2-acetamido-2-deoxy-alpha-D-glucopyranoside + H2O = 1D-myo-inositol 2-amino-2-deoxy-alpha-D-glucopyranoside + acetate. Catalyzes the deacetylation of 1D-myo-inositol 2-acetamido-2-deoxy-alpha-D-glucopyranoside (GlcNAc-Ins) in the mycothiol biosynthesis pathway. The protein is 1D-myo-inositol 2-acetamido-2-deoxy-alpha-D-glucopyranoside deacetylase 3 of Catenulispora acidiphila (strain DSM 44928 / JCM 14897 / NBRC 102108 / NRRL B-24433 / ID139908).